Here is a 248-residue protein sequence, read N- to C-terminus: Probable phosphatase VCM66_A0854 (248 aa).

Zn(2+)-binding residues include His-8, His-10, His-16, His-41, Glu-74, His-102, His-132, Asp-194, and His-196.

It belongs to the PHP family. Zn(2+) is required as a cofactor.

The chain is Probable phosphatase VCM66_A0854 from Vibrio cholerae serotype O1 (strain M66-2).